A 62-amino-acid chain; its full sequence is Sperm protamine P1 (62 aa).

The interval 1–62 (MARYRHSRSR…RYSRRRRRRY (62 aa)) is disordered.

This sequence belongs to the protamine P1 family. Testis.

The protein localises to the nucleus. The protein resides in the chromosome. Protamines substitute for histones in the chromatin of sperm during the haploid phase of spermatogenesis. They compact sperm DNA into a highly condensed, stable and inactive complex. The polypeptide is Sperm protamine P1 (PRM1) (Dendrolagus dorianus (Doria's tree-kangaroo)).